Reading from the N-terminus, the 87-residue chain is Phosphoribosyl-ATP pyrophosphatase (87 aa).

This sequence belongs to the PRA-PH family.

The protein localises to the cytoplasm. The enzyme catalyses 1-(5-phospho-beta-D-ribosyl)-ATP + H2O = 1-(5-phospho-beta-D-ribosyl)-5'-AMP + diphosphate + H(+). The protein operates within amino-acid biosynthesis; L-histidine biosynthesis; L-histidine from 5-phospho-alpha-D-ribose 1-diphosphate: step 2/9. This is Phosphoribosyl-ATP pyrophosphatase from Nocardioides sp. (strain ATCC BAA-499 / JS614).